The following is a 460-amino-acid chain: ESX-1 secretion-associated protein EspB (460 aa).

Disordered regions lie at residues 92–116 (LDND…SAEL), 303–335 (PSDG…PADT), and 405–441 (LGGG…TEDR).

In terms of processing, cleaved in the C-terminal region by MycP1.

The protein resides in the secreted. The polypeptide is ESX-1 secretion-associated protein EspB (Mycobacterium tuberculosis (strain CDC 1551 / Oshkosh)).